The sequence spans 76 residues: DNA-directed RNA polymerase subunit omega (76 aa).

Belongs to the RNA polymerase subunit omega family. As to quaternary structure, in cyanobacteria the RNAP catalytic core is composed of 2 alpha, 1 beta, 1 beta', 1 gamma and 1 omega subunit. When a sigma factor is associated with the core the holoenzyme is formed, which can initiate transcription.

It catalyses the reaction RNA(n) + a ribonucleoside 5'-triphosphate = RNA(n+1) + diphosphate. Promotes RNA polymerase assembly. Latches the N- and C-terminal regions of the beta' subunit thereby facilitating its interaction with the beta and alpha subunits. The sequence is that of DNA-directed RNA polymerase subunit omega from Acaryochloris marina (strain MBIC 11017).